A 204-amino-acid polypeptide reads, in one-letter code: Recombination protein RecR (204 aa).

The C4-type zinc finger occupies cysteine 57–cysteine 72. A Toprim domain is found at glutamate 80 to proline 181.

Belongs to the RecR family.

May play a role in DNA repair. It seems to be involved in an RecBC-independent recombinational process of DNA repair. It may act with RecF and RecO. This is Recombination protein RecR from Bdellovibrio bacteriovorus (strain ATCC 15356 / DSM 50701 / NCIMB 9529 / HD100).